Consider the following 61-residue polypeptide: Temporin-SN4 (61 aa).

Residues 1–22 (MFTLKKTLLLLFFLGTINLSLC) form the signal peptide. A propeptide spans 23 to 44 (EEERNAEEERRDGDDEMDVEVK) (removed in mature form). Lys61 bears the Lysine amide mark.

Belongs to the frog skin active peptide (FSAP) family. Temporin subfamily. Expressed by the skin glands.

Its subcellular location is the secreted. In terms of biological role, antimicrobial peptide. Active against some Gram-positive and Gram-negative bacterial strains. Active against fungus C.glabrata 090902 but not against C.albicans ATCC 12231. Shows weak hemolytic activity against human erythrocytes. This Sylvirana spinulosa (Fine-spined frog) protein is Temporin-SN4.